Here is a 447-residue protein sequence, read N- to C-terminus: ATP-dependent protease ATPase subunit HslU (447 aa).

Residues Ile-18, 60–65 (GVGKTE), Asp-259, Glu-325, and Arg-397 each bind ATP.

The protein belongs to the ClpX chaperone family. HslU subfamily. A double ring-shaped homohexamer of HslV is capped on each side by a ring-shaped HslU homohexamer. The assembly of the HslU/HslV complex is dependent on binding of ATP.

The protein resides in the cytoplasm. Its function is as follows. ATPase subunit of a proteasome-like degradation complex; this subunit has chaperone activity. The binding of ATP and its subsequent hydrolysis by HslU are essential for unfolding of protein substrates subsequently hydrolyzed by HslV. HslU recognizes the N-terminal part of its protein substrates and unfolds these before they are guided to HslV for hydrolysis. The sequence is that of ATP-dependent protease ATPase subunit HslU from Burkholderia pseudomallei (strain 668).